A 123-amino-acid chain; its full sequence is Ribonuclease P protein component 1 (123 aa).

The disordered stretch occupies residues 73–93 (PDNGVGTAFKPAGGETRQTTG).

It belongs to the eukaryotic/archaeal RNase P protein component 1 family. Consists of a catalytic RNA component and at least 4-5 protein subunits.

The protein localises to the cytoplasm. The catalysed reaction is Endonucleolytic cleavage of RNA, removing 5'-extranucleotides from tRNA precursor.. In terms of biological role, part of ribonuclease P, a protein complex that generates mature tRNA molecules by cleaving their 5'-ends. This Halobacterium salinarum (strain ATCC 29341 / DSM 671 / R1) protein is Ribonuclease P protein component 1.